Reading from the N-terminus, the 253-residue chain is uncharacterized protein (253 aa).

Positions 4 to 73 constitute a BON 1 domain; it reads FGKSTADRVK…IDVSGVTVLQ (70 aa). The segment covering 79 to 93 has biased composition (low complexity); the sequence is AAQTAPTTPAQTSPS. The interval 79–105 is disordered; that stretch reads AAQTAPTTPAQTSPSVQDSPSTPVQMP. A BON 2 domain is found at 119-188; the sequence is DTSRIAKAVL…VDISGLRVAQ (70 aa). Residues 204 to 251 form the LysM domain; sequence TVYTVKPGDSLSKIAEHYYGDQMEYKKIAHYNNISNPDLIQPGQKLRI.

This is an uncharacterized protein from Deinococcus radiodurans (strain ATCC 13939 / DSM 20539 / JCM 16871 / CCUG 27074 / LMG 4051 / NBRC 15346 / NCIMB 9279 / VKM B-1422 / R1).